Here is a 598-residue protein sequence, read N- to C-terminus: Urease subunit alpha (598 aa).

Residues histidine 141, histidine 143, and lysine 223 each coordinate Ni(2+). Position 223 is an N6-carboxylysine (lysine 223). Histidine 225 contacts substrate. Histidine 252 and histidine 278 together coordinate Ni(2+). Catalysis depends on histidine 326, which acts as the Proton donor. A Ni(2+)-binding site is contributed by aspartate 366.

This sequence belongs to the metallo-dependent hydrolases superfamily. Urease alpha subunit family. In terms of assembly, heterotrimer of UreA (gamma), UreB (beta) and UreC (alpha) subunits. Three heterotrimers associate to form the active enzyme. Ni cation serves as cofactor. Carboxylation allows a single lysine to coordinate two nickel ions.

The protein resides in the cytoplasm. The catalysed reaction is urea + 2 H2O + H(+) = hydrogencarbonate + 2 NH4(+). It functions in the pathway nitrogen metabolism; urea degradation; CO(2) and NH(3) from urea (urease route): step 1/1. This Ureaplasma parvum serovar 3 (strain ATCC 27815 / 27 / NCTC 11736) protein is Urease subunit alpha.